A 484-amino-acid polypeptide reads, in one-letter code: Protein phosphatase 1B (484 aa).

Over residues 1–14 (MGAFLDKPKTEKHN) the composition is skewed to basic and acidic residues. The segment at 1-20 (MGAFLDKPKTEKHNAHGAGN) is disordered. The N-myristoyl glycine moiety is linked to residue Gly2. A Glycyl lysine isopeptide (Lys-Gly) (interchain with G-Cter in ISG15) cross-link involves residue Lys12. Residues 23 to 295 (RYGLSSMQGW…DNMSIVLVCF (273 aa)) form the PPM-type phosphatase domain. 2 residues coordinate Mn(2+): Asp60 and Gly61. A Glycyl lysine isopeptide (Lys-Gly) (interchain with G-Cter in ISG15) cross-link involves residue Lys142. Asp243 and Asp286 together coordinate Mn(2+). Ser391 is modified (phosphoserine). Positions 431 to 484 (EENPAEQAATAASSNSDAGNTVAMQESHTESKSDLAELDSCTEDAGTKMSGEKL) are disordered. Positions 440–456 (TAASSNSDAGNTVAMQE) are enriched in polar residues.

This sequence belongs to the PP2C family. Monomer. Interacts with PAK6. Interacts with the phosphorylated form of IKBKB/IKKB. Requires Mg(2+) as cofactor. The cofactor is Mn(2+). Post-translationally, isgylation negatively regulates its activity. N-myristoylation is essential for the recognition of its substrates for dephosphorylation.

Its subcellular location is the cytoplasm. It localises to the cytosol. The protein resides in the membrane. It catalyses the reaction O-phospho-L-seryl-[protein] + H2O = L-seryl-[protein] + phosphate. The enzyme catalyses O-phospho-L-threonyl-[protein] + H2O = L-threonyl-[protein] + phosphate. Enzyme with a broad specificity. Dephosphorylates PRKAA1 and PRKAA2. Inhibits TBK1-mediated antiviral signaling by dephosphorylating it at 'Ser-172'. Plays an important role in the termination of TNF-alpha-mediated NF-kappa-B activation through dephosphorylating and inactivating IKBKB/IKKB. This Bos taurus (Bovine) protein is Protein phosphatase 1B (PPM1B).